A 482-amino-acid polypeptide reads, in one-letter code: MNDLIKLSVAKMHLALARREISSLELVEAHLLQIRERNAHTNALILVTEEEARQRAKLADERLKRGESVNTLTGIPCVIKDMYCTKGVRTTAASRALRNFVPTYESTVTSKLIDAGAVMLGKANMDEFAMGSSNTSSFFGPVKNPLKGKKGVDLVPGGSSGGSAAAVADYYSPFSLGSDTGGSVRQPASFCGLVGLRPTYGRCSRWGMIPLANSLDQAGILSRNVEDNAAVFEVISGYDRKDSTCAKLEPFKYNKNPDIRHIKVGIPQECKVSGLSSHIVKLWESTANILRQLGAEIIDVSLPCVEYSLMVYYIICSAEASSQLARYDGIRYSPDPSISASTISELYEKYRSVSFGREVKRRLFMGTHVLSSSGYADYYAAAKELQEEIVNEYSAVFEKVDVILNPTAPNDAFPIDGKLEPLEMYMNDIFTVPTSVAKLPCISIPVGLSEDDMPLGMHLTANYFAEELLLNVALALQNALYK.

Catalysis depends on charge relay system residues lysine 80 and serine 159. Residue serine 183 is the Acyl-ester intermediate of the active site.

It belongs to the amidase family. GatA subfamily. As to quaternary structure, heterotrimer of A, B and C subunits.

It catalyses the reaction L-glutamyl-tRNA(Gln) + L-glutamine + ATP + H2O = L-glutaminyl-tRNA(Gln) + L-glutamate + ADP + phosphate + H(+). Its function is as follows. Allows the formation of correctly charged Gln-tRNA(Gln) through the transamidation of misacylated Glu-tRNA(Gln) in organisms which lack glutaminyl-tRNA synthetase. The reaction takes place in the presence of glutamine and ATP through an activated gamma-phospho-Glu-tRNA(Gln). The polypeptide is Glutamyl-tRNA(Gln) amidotransferase subunit A (Neorickettsia sennetsu (strain ATCC VR-367 / Miyayama) (Ehrlichia sennetsu)).